The chain runs to 205 residues: Holliday junction branch migration complex subunit RuvA (205 aa).

Positions 1–64 are domain I; sequence MIGKLRGIVD…DEAIRLIGFT (64 aa). A domain II region spans residues 65-143; sequence TDSEREWFRL…DSMGLSAALE (79 aa). The segment at 144-152 is flexible linker; that stretch reads VGVNGEAVS. The interval 153-205 is domain III; the sequence is SVSAPARDAVSALVNLGYPQAQAMGAVAAAAKRLDDAASTEQLIRHGLKELAR.

Belongs to the RuvA family. As to quaternary structure, homotetramer. Forms an RuvA(8)-RuvB(12)-Holliday junction (HJ) complex. HJ DNA is sandwiched between 2 RuvA tetramers; dsDNA enters through RuvA and exits via RuvB. An RuvB hexamer assembles on each DNA strand where it exits the tetramer. Each RuvB hexamer is contacted by two RuvA subunits (via domain III) on 2 adjacent RuvB subunits; this complex drives branch migration. In the full resolvosome a probable DNA-RuvA(4)-RuvB(12)-RuvC(2) complex forms which resolves the HJ.

It localises to the cytoplasm. Its function is as follows. The RuvA-RuvB-RuvC complex processes Holliday junction (HJ) DNA during genetic recombination and DNA repair, while the RuvA-RuvB complex plays an important role in the rescue of blocked DNA replication forks via replication fork reversal (RFR). RuvA specifically binds to HJ cruciform DNA, conferring on it an open structure. The RuvB hexamer acts as an ATP-dependent pump, pulling dsDNA into and through the RuvAB complex. HJ branch migration allows RuvC to scan DNA until it finds its consensus sequence, where it cleaves and resolves the cruciform DNA. In Parvibaculum lavamentivorans (strain DS-1 / DSM 13023 / NCIMB 13966), this protein is Holliday junction branch migration complex subunit RuvA.